The sequence spans 163 residues: Nucleotide-binding protein tll0793 (163 aa).

Belongs to the YajQ family.

Nucleotide-binding protein. The polypeptide is Nucleotide-binding protein tll0793 (Thermosynechococcus vestitus (strain NIES-2133 / IAM M-273 / BP-1)).